A 279-amino-acid chain; its full sequence is Putative pyruvate, phosphate dikinase regulatory protein (279 aa).

153–160 (GVSRTSKT) contacts ADP.

Belongs to the pyruvate, phosphate/water dikinase regulatory protein family. PDRP subfamily.

The catalysed reaction is N(tele)-phospho-L-histidyl/L-threonyl-[pyruvate, phosphate dikinase] + ADP = N(tele)-phospho-L-histidyl/O-phospho-L-threonyl-[pyruvate, phosphate dikinase] + AMP + H(+). It carries out the reaction N(tele)-phospho-L-histidyl/O-phospho-L-threonyl-[pyruvate, phosphate dikinase] + phosphate + H(+) = N(tele)-phospho-L-histidyl/L-threonyl-[pyruvate, phosphate dikinase] + diphosphate. Bifunctional serine/threonine kinase and phosphorylase involved in the regulation of the pyruvate, phosphate dikinase (PPDK) by catalyzing its phosphorylation/dephosphorylation. The polypeptide is Putative pyruvate, phosphate dikinase regulatory protein (Bradyrhizobium diazoefficiens (strain JCM 10833 / BCRC 13528 / IAM 13628 / NBRC 14792 / USDA 110)).